The sequence spans 96 residues: MAEVEETLKRIQSHKGVIGTMVVNAEGIPIRTTLDNSTTVQYAGLLHQLTMKAKSTVRDIDPQNDLTFLRIRSKKHEIMVAPDKEYLLIVIQNPCE.

Alanine 2 carries the N-acetylalanine modification.

This sequence belongs to the GAMAD family. As to quaternary structure, homodimer. The cytoplasmic dynein 1 complex consists of two catalytic heavy chains (HCs) and a number of non-catalytic subunits presented by intermediate chains (ICs), light intermediate chains (LICs) and light chains (LCs); the composition seems to vary in respect to the IC, LIC and LC composition. The heavy chain homodimer serves as a scaffold for the probable homodimeric assembly of the respective non-catalytic subunits. The ICs and LICs bind directly to the HC dimer and the LCs assemble on the IC dimer. Interacts with DYNC1I1 and DYNC1I2. Self-associates. Interacts with DYNLRB1.

It localises to the cytoplasm. The protein resides in the cytoskeleton. Its function is as follows. Acts as one of several non-catalytic accessory components of the cytoplasmic dynein 1 complex that are thought to be involved in linking dynein to cargos and to adapter proteins that regulate dynein function. Cytoplasmic dynein 1 acts as a motor for the intracellular retrograde motility of vesicles and organelles along microtubules. This is Dynein light chain roadblock-type 2 (DYNLRB2) from Bos taurus (Bovine).